Here is a 369-residue protein sequence, read N- to C-terminus: uncharacterized protein (369 aa).

Over residues 110–121 the composition is skewed to low complexity; sequence ARPTDAFGAPIA. The disordered stretch occupies residues 110 to 172; the sequence is ARPTDAFGAP…PPPPASGGGA (63 aa). Positions 122–136 are enriched in pro residues; it reads PSEPTPASAPSPPKA.

This is an uncharacterized protein from Lymantria dispar multicapsid nuclear polyhedrosis virus (LdMNPV).